Here is an 83-residue protein sequence, read N- to C-terminus: Large ribosomal subunit protein bL27 (83 aa).

Positions 1 to 25 (MAHKKGQGASRNGRDSESKRLGLKV) are disordered.

Belongs to the bacterial ribosomal protein bL27 family.

The chain is Large ribosomal subunit protein bL27 from Chlamydia muridarum (strain MoPn / Nigg).